Here is a 470-residue protein sequence, read N- to C-terminus: Probable tocopherol cyclase, chloroplastic (470 aa).

The transit peptide at 1 to 61 directs the protein to the chloroplast; the sequence is MDLAAAAVAV…APTPRDRALR (61 aa). The segment at 14–48 is disordered; it reads RPAPPPRRCAPRRHRRALAPRAASSSPSPSTAVAA. The span at 22–31 shows a compositional bias: basic residues; the sequence is CAPRRHRRAL. Residues 32–48 are compositionally biased toward low complexity; sequence APRAASSSPSPSTAVAA.

Expressed in the roots, stems, leaves and spikelets.

It localises to the plastid. The protein resides in the chloroplast. The protein localises to the plastoglobule. Its pathway is cofactor biosynthesis; tocopherol biosynthesis. Its function is as follows. Involved in the synthesis of both tocopherols and tocotrienols (vitamin E), which presumably protect photosynthetic complexes from oxidative stress. Catalyzes the conversion of 2-methyl-6-phytyl-1,4-hydroquinone and 2,3-dimethyl-5-phytyl-1,4-hydroquinone (DMPQ) to delta- and gamma-tocopherol respectively. Also converts 2,3-dimethyl-5-geranylgeranyl-1,4-hydroquinone (DMGQ) to gamma-tocotrienol. The polypeptide is Probable tocopherol cyclase, chloroplastic (VTE1) (Oryza sativa subsp. japonica (Rice)).